We begin with the raw amino-acid sequence, 488 residues long: Malonate-semialdehyde dehydrogenase 1 (488 aa).

NAD(+) is bound by residues F156, K180, E183, R184, S233, and S255. Residue C288 is the Nucleophile of the active site. E387 is an NAD(+) binding site.

This sequence belongs to the aldehyde dehydrogenase family. IolA subfamily. In terms of assembly, homotetramer.

It carries out the reaction 3-oxopropanoate + NAD(+) + CoA + H2O = hydrogencarbonate + acetyl-CoA + NADH + H(+). It catalyses the reaction 2-methyl-3-oxopropanoate + NAD(+) + CoA + H2O = propanoyl-CoA + hydrogencarbonate + NADH + H(+). It participates in polyol metabolism; myo-inositol degradation into acetyl-CoA; acetyl-CoA from myo-inositol: step 7/7. Functionally, catalyzes the oxidation of malonate semialdehyde (MSA) and methylmalonate semialdehyde (MMSA) into acetyl-CoA and propanoyl-CoA, respectively. Is involved in a myo-inositol catabolic pathway. Bicarbonate, and not CO2, is the end-product of the enzymatic reaction. The chain is Malonate-semialdehyde dehydrogenase 1 from Geobacillus kaustophilus (strain HTA426).